The sequence spans 118 residues: uncharacterized protein (118 aa).

A run of 4 helical transmembrane segments spans residues 5–20, 25–42, 53–73, and 83–103; these read IVFY…SVVM, VIRT…LLYF, ALAI…FIIL, and LFFT…SLSI.

It is found in the cell membrane. This is an uncharacterized protein from Bacillus subtilis (strain 168).